A 1025-amino-acid polypeptide reads, in one-letter code: Error-prone DNA polymerase (1025 aa).

It belongs to the DNA polymerase type-C family. DnaE2 subfamily.

The protein localises to the cytoplasm. The enzyme catalyses DNA(n) + a 2'-deoxyribonucleoside 5'-triphosphate = DNA(n+1) + diphosphate. In terms of biological role, DNA polymerase involved in damage-induced mutagenesis and translesion synthesis (TLS). It is not the major replicative DNA polymerase. The chain is Error-prone DNA polymerase from Pseudomonas fluorescens (strain Pf0-1).